A 384-amino-acid chain; its full sequence is L-lactate dehydrogenase (384 aa).

Positions 1-380 (MIISSSNDYR…NESCLVEMNK (380 aa)) constitute an FMN hydroxy acid dehydrogenase domain. Y24 contacts substrate. Residues S106 and Q127 each contribute to the FMN site. Y129 provides a ligand contact to substrate. T155 contacts FMN. R164 serves as a coordination point for substrate. K251 serves as a coordination point for FMN. Catalysis depends on H275, which acts as the Proton acceptor. R278 contacts substrate. 306 to 330 (DSGIRNGLDVVRMLALGADSVMLGR) contributes to the FMN binding site.

This sequence belongs to the FMN-dependent alpha-hydroxy acid dehydrogenase family. FMN serves as cofactor.

Its subcellular location is the cell inner membrane. The catalysed reaction is (S)-lactate + A = pyruvate + AH2. Catalyzes the conversion of L-lactate to pyruvate. Is coupled to the respiratory chain. In Acinetobacter baylyi (strain ATCC 33305 / BD413 / ADP1), this protein is L-lactate dehydrogenase.